Reading from the N-terminus, the 414-residue chain is 3-phosphoshikimate 1-carboxyvinyltransferase (414 aa).

3-phosphoshikimate-binding residues include Lys-20, Ser-21, and Arg-25. Lys-20 lines the phosphoenolpyruvate pocket. Arg-113 lines the phosphoenolpyruvate pocket. Residues Ser-154, Ser-155, Gln-156, Ser-181, Asp-296, and Lys-323 each coordinate 3-phosphoshikimate. Gln-156 is a binding site for phosphoenolpyruvate. The active-site Proton acceptor is Asp-296. Phosphoenolpyruvate-binding residues include Arg-327, Arg-371, and Lys-395.

This sequence belongs to the EPSP synthase family. In terms of assembly, monomer.

The protein localises to the cytoplasm. It catalyses the reaction 3-phosphoshikimate + phosphoenolpyruvate = 5-O-(1-carboxyvinyl)-3-phosphoshikimate + phosphate. Its pathway is metabolic intermediate biosynthesis; chorismate biosynthesis. Its function is as follows. Catalyzes the transfer of the enolpyruvyl moiety of phosphoenolpyruvate (PEP) to the 5-hydroxyl of shikimate-3-phosphate (S3P) to produce enolpyruvyl shikimate-3-phosphate and inorganic phosphate. The polypeptide is 3-phosphoshikimate 1-carboxyvinyltransferase (Saccharolobus solfataricus (strain ATCC 35092 / DSM 1617 / JCM 11322 / P2) (Sulfolobus solfataricus)).